A 230-amino-acid polypeptide reads, in one-letter code: Ribonuclease 3 (230 aa).

One can recognise an RNase III domain in the interval 7–134 (LEELESKLGI…VIAAIYLDKG (128 aa)). A Mg(2+)-binding site is contributed by Glu-47. The active site involves Asp-51. The Mg(2+) site is built by Asp-120 and Glu-123. Glu-123 is a catalytic residue. A DRBM domain is found at 161 to 230 (DYKTRLQEIL…ACKALKGLDN (70 aa)).

The protein belongs to the ribonuclease III family. As to quaternary structure, homodimer. It depends on Mg(2+) as a cofactor.

It localises to the cytoplasm. It catalyses the reaction Endonucleolytic cleavage to 5'-phosphomonoester.. Its function is as follows. Digests double-stranded RNA. Involved in the processing of primary rRNA transcript to yield the immediate precursors to the large and small rRNAs (23S and 16S). Processes some mRNAs, and tRNAs when they are encoded in the rRNA operon. Processes pre-crRNA and tracrRNA of type II CRISPR loci if present in the organism. This chain is Ribonuclease 3, found in Clostridium acetobutylicum (strain ATCC 824 / DSM 792 / JCM 1419 / IAM 19013 / LMG 5710 / NBRC 13948 / NRRL B-527 / VKM B-1787 / 2291 / W).